Consider the following 150-residue polypeptide: CCAAT/enhancer-binding protein gamma (150 aa).

Residue lysine 3 forms a Glycyl lysine isopeptide (Lys-Gly) (interchain with G-Cter in SUMO2) linkage. The disordered stretch occupies residues 27-94 (GLQQVPQLVP…QKAQDTLQRV (68 aa)). Low complexity predominate over residues 28 to 37 (LQQVPQLVPA). A compositionally biased stretch (basic and acidic residues) spans 56–72 (SPMDRNSDEYRQRRERN). The region spanning 62 to 125 (SDEYRQRRER…SVLKDLFLEH (64 aa)) is the bZIP domain. Residues 66–93 (RQRRERNNMAVKKSRLKSKQKAQDTLQR) are basic motif. The interval 97–118 (LKEENERLEAKIKLLTKELSVL) is leucine-zipper.

Belongs to the bZIP family. C/EBP subfamily. Binds DNA as a dimer and can form stable heterodimers with CEBPA and CEBPB. Interacts with ZNF638; this interaction increases transcriptional activation.

It is found in the nucleus. Transcription factor that binds to the promoter and the enhancer regions of target genes. Binds to the promoter and the enhancer of the alpha-1-fetoprotein gene. Binds to the enhancer element PRE-I (positive regulatory element-I) of the IL-4 gene. Binds to the promoter and the enhancer of the immunoglobulin heavy chain. Binds to GPE1, a cis-acting element in the G-CSF gene promoter. The protein is CCAAT/enhancer-binding protein gamma (Cebpg) of Rattus norvegicus (Rat).